Consider the following 516-residue polypeptide: 7-chloro-L-tryptophan 6-halogenase KtzR (516 aa).

FAD is bound by residues Gly-6, Thr-8, Ala-9, Glu-42, and Ala-43. Residue Lys-71 is part of the active site. Val-195 is a binding site for FAD. 2 residues coordinate chloride: Thr-357 and Gly-358. Ile-359 provides a ligand contact to FAD.

It belongs to the flavin-dependent halogenase family. Bacterial tryptophan halogenase subfamily.

It carries out the reaction 7-chloro-L-tryptophan + FADH2 + chloride + O2 = 6,7-dichloro-L-tryptophan + FAD + 2 H2O. Involved in the biosynthesis of kutznerides, actinomycete-derived antifungal and antimicrobial cyclic hexadepsipeptides. Together with KtzQ, catalyzes the regiospecific dichlorination of L-tryptophan (L-Trp) to produce 6,7-dichloro-L-tryptophan. KtzR catalyzes the chlorination of 7-chloro-L-tryptophan at C6 position to yield 6,7-dichloro-L-tryptophan. Can also use L-Trp as substrate and form 6-chloro-L-tryptophan, but has a 120-fold preference for 7-chloro-L-tryptophan over L-Trp. Cannot use piperazic acid or gamma,delta-dehydropiperazic acid. In Kutzneria sp. (strain 744), this protein is 7-chloro-L-tryptophan 6-halogenase KtzR.